The primary structure comprises 117 residues: Large ribosomal subunit protein uL18 (117 aa).

This sequence belongs to the universal ribosomal protein uL18 family. In terms of assembly, part of the 50S ribosomal subunit; part of the 5S rRNA/L5/L18/L25 subcomplex. Contacts the 5S and 23S rRNAs.

This is one of the proteins that bind and probably mediate the attachment of the 5S RNA into the large ribosomal subunit, where it forms part of the central protuberance. The protein is Large ribosomal subunit protein uL18 of Hydrogenovibrio crunogenus (strain DSM 25203 / XCL-2) (Thiomicrospira crunogena).